A 255-amino-acid chain; its full sequence is MPIEILTIPCLNDNYAFLVHDTATGQTALIDVPEAAPILKVLAERTWQLSEVWITHHHADHVQGLGDILSAHPAQVRGAARDAHRLPALDVELRDGESFDFAGHKVDVMDVSGHTVGHIAYYCADAKAVFTADSLMALGCGRLFEGTADQMWDSLSKLAALPSETQVYSGHEYTAANARFALTIDPHNPDLISRSEGITAARAAAKPTVPSTLATEAATNPFLRAADPAIRAHLNMQHASDSEVFAEIRARKDAF.

Zn(2+) is bound by residues histidine 56, histidine 58, aspartate 60, histidine 61, histidine 114, aspartate 133, and histidine 171.

Belongs to the metallo-beta-lactamase superfamily. Glyoxalase II family. In terms of assembly, monomer. The cofactor is Zn(2+).

The enzyme catalyses an S-(2-hydroxyacyl)glutathione + H2O = a 2-hydroxy carboxylate + glutathione + H(+). The protein operates within secondary metabolite metabolism; methylglyoxal degradation; (R)-lactate from methylglyoxal: step 2/2. Its function is as follows. Thiolesterase that catalyzes the hydrolysis of S-D-lactoyl-glutathione to form glutathione and D-lactic acid. In Roseobacter denitrificans (strain ATCC 33942 / OCh 114) (Erythrobacter sp. (strain OCh 114)), this protein is Hydroxyacylglutathione hydrolase.